The following is a 152-amino-acid chain: Deoxyuridine 5'-triphosphate nucleotidohydrolase (152 aa).

Substrate is bound by residues 71-73, Asn84, 88-90, and Met98; these read RSG and LID.

Belongs to the dUTPase family. The cofactor is Mg(2+).

The enzyme catalyses dUTP + H2O = dUMP + diphosphate + H(+). Its pathway is pyrimidine metabolism; dUMP biosynthesis; dUMP from dCTP (dUTP route): step 2/2. This enzyme is involved in nucleotide metabolism: it produces dUMP, the immediate precursor of thymidine nucleotides and it decreases the intracellular concentration of dUTP so that uracil cannot be incorporated into DNA. The chain is Deoxyuridine 5'-triphosphate nucleotidohydrolase from Shewanella baltica (strain OS155 / ATCC BAA-1091).